The primary structure comprises 527 residues: Peptide chain release factor 3 (527 aa).

Positions 9–277 (AKRRTFAIIS…CIVDWAPQPL (269 aa)) constitute a tr-type G domain. Residues 18-25 (SHPDAGKT), 86-90 (DTPGH), and 140-143 (NKLD) each bind GTP.

Belongs to the TRAFAC class translation factor GTPase superfamily. Classic translation factor GTPase family. PrfC subfamily.

Its subcellular location is the cytoplasm. Functionally, increases the formation of ribosomal termination complexes and stimulates activities of RF-1 and RF-2. It binds guanine nucleotides and has strong preference for UGA stop codons. It may interact directly with the ribosome. The stimulation of RF-1 and RF-2 is significantly reduced by GTP and GDP, but not by GMP. This Pseudomonas aeruginosa (strain LESB58) protein is Peptide chain release factor 3.